A 2276-amino-acid chain; its full sequence is Poly [ADP-ribose] polymerase tankyrase (2276 aa).

2 stretches are compositionally biased toward basic residues: residues 1–15 (MARRVNKKKSPVKAA) and 87–98 (KAVKAPKVKAPS). 2 disordered regions span residues 1 to 20 (MARRVNKKKSPVKAARKIDG) and 79 to 103 (SSKTGQKVKAVKAPKVKAPSKKGND). 15 ANK repeats span residues 345–374 (KNITPLHTAAISNSTHMLEAMRAVYPTINI), 378–407 (DNWYTMHYAACAPGTAPMEFLLKNGGSVTM), 411–440 (QTETPLHVAARAGRAVNCTFLMKEMLDLEK), 461–490 (SGNSALHLAVLRNNLDVVDALLAEPTIVVD), 498–527 (NRLTPLMMACGKGYLEMAKKLVEKGALVEG), 531–560 (KKRTPLIHAMLNGQIHTAAFLLAKGASLTL), 564–593 (SGNTAAHYAAAYGFLDCLKLLASIDDNILS), 598–627 (WQLYPLSVAYLKGHYGIVTWLLEGPHKDKA), 675–725 (SGQT…KVDV), 729–758 (EDNTPLHYALTNGNLMLFNLMLDKVANKRN), 970–999 (KDDVLIVQAIMFDKPNVVELILDTASEMHL), 1171–1200 (NGNTILHLAAIKNSTICLMTLIRKKCHVDL), 1204–1233 (DGNTPLALAVHHGRQSSALTLIQANADVTE), 1472–1501 (GLIPPISFAVLQENPNMIRALRNAGASLKT), and 1505–1535 (YGRTPLMYAIMTNNRSVVDAIVGDGKLAVVL). Positions 1570 to 1649 (VPARVESDEE…STGPKRKKLV (80 aa)) are disordered. Acidic residues-rich tracts occupy residues 1576 to 1590 (SDEEEEDNSGSESGE) and 1612 to 1622 (SDDEDDDDDDS). One copy of the ANK 16 repeat lies at 1662–1706 (KENNPLHYFIEPLAWENVELLGDLAAANKTAIVQCLIDKRSPNPI). The WGR domain maps to 1788 to 1889 (GLVSFCDETQ…ANFRDMPKKY (102 aa)). One can recognise a PARP alpha-helical domain in the interval 1910-2045 (KNTEKDPIRR…EIETATRLLC (136 aa)). Residues 2047-2276 (AEFRQDLDRV…VLPKYIVMYK (230 aa)) enclose the PARP catalytic domain.

Expressed throughout the head and tail, in germ cells and somatic cells.

It is found in the nucleus. It localises to the chromosome. The catalysed reaction is NAD(+) + (ADP-D-ribosyl)n-acceptor = nicotinamide + (ADP-D-ribosyl)n+1-acceptor + H(+).. It catalyses the reaction L-aspartyl-[protein] + NAD(+) = 4-O-(ADP-D-ribosyl)-L-aspartyl-[protein] + nicotinamide. It carries out the reaction L-glutamyl-[protein] + NAD(+) = 5-O-(ADP-D-ribosyl)-L-glutamyl-[protein] + nicotinamide. Poly[ADP-ribose] polymerases modify various nuclear proteins by poly(ADP-ribosyl)ation, a post-translational modification synthesized after DNA damage that appears as an obligatory step in a detection/signaling pathway leading to the reparation of DNA strand breaks and programmed cell death. This is Poly [ADP-ribose] polymerase tankyrase from Caenorhabditis elegans.